A 364-amino-acid polypeptide reads, in one-letter code: Ferrochelatase (364 aa).

Histidine 211 and glutamate 292 together coordinate Fe cation.

Belongs to the ferrochelatase family.

It is found in the cytoplasm. The catalysed reaction is heme b + 2 H(+) = protoporphyrin IX + Fe(2+). Its pathway is porphyrin-containing compound metabolism; protoheme biosynthesis; protoheme from protoporphyrin-IX: step 1/1. Catalyzes the ferrous insertion into protoporphyrin IX. This is Ferrochelatase from Nitrosomonas europaea (strain ATCC 19718 / CIP 103999 / KCTC 2705 / NBRC 14298).